Here is a 130-residue protein sequence, read N- to C-terminus: Small ribosomal subunit protein uS8 (130 aa).

Belongs to the universal ribosomal protein uS8 family. Part of the 30S ribosomal subunit.

In terms of biological role, one of the primary rRNA binding proteins, it binds directly to 16S rRNA central domain where it helps coordinate assembly of the platform of the 30S subunit. This Pyrobaculum neutrophilum (strain DSM 2338 / JCM 9278 / NBRC 100436 / V24Sta) (Thermoproteus neutrophilus) protein is Small ribosomal subunit protein uS8.